Reading from the N-terminus, the 495-residue chain is UDP-N-acetylmuramate--L-alanine ligase (495 aa).

Position 122-128 (122-128) interacts with ATP; sequence GTHGKTT.

This sequence belongs to the MurCDEF family.

The protein resides in the cytoplasm. It catalyses the reaction UDP-N-acetyl-alpha-D-muramate + L-alanine + ATP = UDP-N-acetyl-alpha-D-muramoyl-L-alanine + ADP + phosphate + H(+). The protein operates within cell wall biogenesis; peptidoglycan biosynthesis. Its function is as follows. Cell wall formation. This is UDP-N-acetylmuramate--L-alanine ligase from Mycobacterium leprae (strain TN).